The following is a 370-amino-acid chain: Flagellar P-ring protein (370 aa).

The first 21 residues, 1–21, serve as a signal peptide directing secretion; it reads MRLFSVVLAVFTLLLPSQAFA.

The protein belongs to the FlgI family. The basal body constitutes a major portion of the flagellar organelle and consists of four rings (L,P,S, and M) mounted on a central rod.

The protein localises to the periplasm. The protein resides in the bacterial flagellum basal body. Assembles around the rod to form the L-ring and probably protects the motor/basal body from shearing forces during rotation. The polypeptide is Flagellar P-ring protein (Alteromonas mediterranea (strain DSM 17117 / CIP 110805 / LMG 28347 / Deep ecotype)).